Consider the following 367-residue polypeptide: UDP-N-acetylglucosamine--N-acetylmuramyl-(pentapeptide) pyrophosphoryl-undecaprenol N-acetylglucosamine transferase (367 aa).

UDP-N-acetyl-alpha-D-glucosamine-binding positions include 10–12 (TGG), N124, S196, and Q300.

This sequence belongs to the glycosyltransferase 28 family. MurG subfamily.

The protein resides in the cell membrane. The catalysed reaction is di-trans,octa-cis-undecaprenyl diphospho-N-acetyl-alpha-D-muramoyl-L-alanyl-D-glutamyl-meso-2,6-diaminopimeloyl-D-alanyl-D-alanine + UDP-N-acetyl-alpha-D-glucosamine = di-trans,octa-cis-undecaprenyl diphospho-[N-acetyl-alpha-D-glucosaminyl-(1-&gt;4)]-N-acetyl-alpha-D-muramoyl-L-alanyl-D-glutamyl-meso-2,6-diaminopimeloyl-D-alanyl-D-alanine + UDP + H(+). It functions in the pathway cell wall biogenesis; peptidoglycan biosynthesis. Cell wall formation. Catalyzes the transfer of a GlcNAc subunit on undecaprenyl-pyrophosphoryl-MurNAc-pentapeptide (lipid intermediate I) to form undecaprenyl-pyrophosphoryl-MurNAc-(pentapeptide)GlcNAc (lipid intermediate II). This chain is UDP-N-acetylglucosamine--N-acetylmuramyl-(pentapeptide) pyrophosphoryl-undecaprenol N-acetylglucosamine transferase, found in Natranaerobius thermophilus (strain ATCC BAA-1301 / DSM 18059 / JW/NM-WN-LF).